The chain runs to 341 residues: tRNA (cytidine(56)-2'-O)-methyltransferase (341 aa).

S-adenosyl-L-methionine is bound by residues leucine 79 and 104–108 (GAEKV). Positions 187 to 294 (IIRHVETVYK…VAHADNLVSM (108 aa)) constitute an HD domain.

This sequence belongs to the aTrm56 family. In terms of assembly, homodimer.

It is found in the cytoplasm. It catalyses the reaction cytidine(56) in tRNA + S-adenosyl-L-methionine = 2'-O-methylcytidine(56) in tRNA + S-adenosyl-L-homocysteine + H(+). Specifically catalyzes the AdoMet-dependent 2'-O-ribose methylation of cytidine at position 56 in tRNAs. This Picrophilus torridus (strain ATCC 700027 / DSM 9790 / JCM 10055 / NBRC 100828 / KAW 2/3) protein is tRNA (cytidine(56)-2'-O)-methyltransferase.